Reading from the N-terminus, the 302-residue chain is Late embryogenesis abundant protein D-29 (302 aa).

Disordered regions lie at residues 25–93 (HMPS…AKEY), 168–193 (VKNA…LADS), and 205–302 (AKEK…NHKN). Composition is skewed to basic and acidic residues over residues 34–70 (RDYS…HAAN) and 79–93 (AKDR…AKEY). The span at 205 to 286 (AKEKVRDMAD…KAEETIESAK (82 aa)) shows a compositional bias: basic and acidic residues.

The protein belongs to the LEA type 1 family.

Functionally, LEA protein are late embryonic proteins abundant in higher plant seed embryos. There are two subsets of LEA proteins (5a and 5b), the first ones are expressed when the cotyledon weight reach 80 mg and the second set are expressed above 100 mg. The function of those proteins is not known. The chain is Late embryogenesis abundant protein D-29 from Gossypium hirsutum (Upland cotton).